Here is a 123-residue protein sequence, read N- to C-terminus: Fluoride-specific ion channel FluC 1 (123 aa).

4 helical membrane passes run 1–21 (MVDL…RYTL), 34–54 (PLAT…LYGF), 59–79 (VIWL…STYI), and 99–119 (LTSI…ANFF). Na(+)-binding residues include G70 and T73.

It belongs to the fluoride channel Fluc/FEX (TC 1.A.43) family.

It localises to the cell membrane. The catalysed reaction is fluoride(in) = fluoride(out). Na(+) is not transported, but it plays an essential structural role and its presence is essential for fluoride channel function. In terms of biological role, fluoride-specific ion channel. Important for reducing fluoride concentration in the cell, thus reducing its toxicity. In Carboxydothermus hydrogenoformans (strain ATCC BAA-161 / DSM 6008 / Z-2901), this protein is Fluoride-specific ion channel FluC 1.